The primary structure comprises 147 residues: Hemoglobin subunit epsilon (147 aa).

Positions 3–147 (HFTAEEKVAI…VAIALGHKYH (145 aa)) constitute a Globin domain. A phosphoserine mark is found at serine 14 and serine 51. 2 residues coordinate heme b: histidine 64 and histidine 93.

This sequence belongs to the globin family. Heterotetramer of two alpha chains and two epsilon chains in early embryonic hemoglobin Gower-2; two zeta chains and two epsilon chains in early embryonic hemoglobin Gower-1. In terms of tissue distribution, red blood cells.

Functionally, the epsilon chain is a beta-type chain of early mammalian embryonic hemoglobin. The chain is Hemoglobin subunit epsilon (HBE1) from Cebus kaapori (Ka'apor capuchin).